The primary structure comprises 444 residues: ATP-dependent protease ATPase subunit HslU (444 aa).

Residues I20 and 62-67 (GVGKTE) each bind ATP. The tract at residues 137 to 162 (LVPPSRGTSGEPERGEDSNARQTFRK) is disordered. The ATP site is built by D257, E322, and R394.

This sequence belongs to the ClpX chaperone family. HslU subfamily. In terms of assembly, a double ring-shaped homohexamer of HslV is capped on each side by a ring-shaped HslU homohexamer. The assembly of the HslU/HslV complex is dependent on binding of ATP.

Its subcellular location is the cytoplasm. ATPase subunit of a proteasome-like degradation complex; this subunit has chaperone activity. The binding of ATP and its subsequent hydrolysis by HslU are essential for unfolding of protein substrates subsequently hydrolyzed by HslV. HslU recognizes the N-terminal part of its protein substrates and unfolds these before they are guided to HslV for hydrolysis. This is ATP-dependent protease ATPase subunit HslU from Bordetella petrii (strain ATCC BAA-461 / DSM 12804 / CCUG 43448).